A 225-amino-acid chain; its full sequence is Orotate phosphoribosyltransferase (225 aa).

Lys-31 lines the 5-phospho-alpha-D-ribose 1-diphosphate pocket. 39-40 (FF) is an orotate binding site. 5-phospho-alpha-D-ribose 1-diphosphate-binding positions include 78–79 (YK), Arg-105, Lys-106, Lys-109, His-111, and 130–138 (DDVLTSGKA). Thr-134 and Arg-163 together coordinate orotate.

The protein belongs to the purine/pyrimidine phosphoribosyltransferase family. PyrE subfamily. As to quaternary structure, homodimer.

The enzyme catalyses orotidine 5'-phosphate + diphosphate = orotate + 5-phospho-alpha-D-ribose 1-diphosphate. It participates in pyrimidine metabolism; UMP biosynthesis via de novo pathway; UMP from orotate: step 1/2. Functionally, catalyzes the transfer of a ribosyl phosphate group from 5-phosphoribose 1-diphosphate to orotate, leading to the formation of orotidine monophosphate (OMP). The polypeptide is Orotate phosphoribosyltransferase (URA5) (Cryptococcus neoformans var. neoformans serotype D (strain B-3501A) (Filobasidiella neoformans)).